The sequence spans 354 residues: Mating-type protein MAT-1 (354 aa).

Residues 60–117 (KAKKALNAFVGFRCYYIAIPAFKQWPMKKLSNLISLLWDRDPNKSLWSLMAKAWSNIR) constitute a DNA-binding region (alpha box).

This sequence belongs to the MATALPHA1 family.

It localises to the nucleus. Its function is as follows. Mating type proteins are sequence specific DNA-binding proteins that act as master switches in fungal differentiation by controlling gene expression in a cell type-specific fashion. Transcriptional activator that induces the transcription of alpha-specific genes. This is Mating-type protein MAT-1 (MAT1) from Cochliobolus cymbopogonis (Curvularia cymbopogonis).